Consider the following 342-residue polypeptide: Foldase protein PrsA (342 aa).

The first 22 residues, 1–22 (MVSVKKIVASALVGVLMFSAVG), serve as a signal peptide directing secretion. Cys-23 carries the N-palmitoyl cysteine lipid modification. Cys-23 is lipidated: S-diacylglycerol cysteine. Residues 190-284 (AKGVLARHLL…FGYHIIQAGA (95 aa)) form the PpiC domain.

Belongs to the PrsA family.

It localises to the cell membrane. The enzyme catalyses [protein]-peptidylproline (omega=180) = [protein]-peptidylproline (omega=0). Functionally, plays a major role in protein secretion by helping the post-translocational extracellular folding of several secreted proteins. In Clostridium perfringens (strain SM101 / Type A), this protein is Foldase protein PrsA.